The sequence spans 361 residues: MATLSFRNLKKTYAGNVPVIHGIDMEIKDGEFIVIVGPSGCGKSTLMRMVAGLETVTSGEILIDDKPVNDLEPAERDIAMVFQNYALYPHMSVFENMAYGLKIRKVPKAEIQKRVEEAAQILELGKLLDRRPRQLSGGQRQRVAMGRAIVREPKVFLFDEPLSNLDAKLRVAMRLEILKLHRRLHTTSLYVTHDQVEAMTLAHRMVVMYQGVPEQIGTPMEVFEKPASTFVAGFIGSPPMNLIEVDVAGDGTMTAEGMPLQISPLQVPSAVRGRKIIMGLRPEHMLLNAEGIPVEIEMIETLGSEQLVHGRRGKHMLVVRCTTRQLSESTVKVGDTMNIGPDGRHDLHWFEPDTGRRVQGL.

Residues 4–235 form the ABC transporter domain; that stretch reads LSFRNLKKTY…PASTFVAGFI (232 aa). 37–44 contributes to the ATP binding site; sequence GPSGCGKS.

Belongs to the ABC transporter superfamily. sn-glycerol-3-phosphate importer (TC 3.A.1.1.3) family. As to quaternary structure, the complex is composed of two ATP-binding proteins (UgpC), two transmembrane proteins (UgpA and UgpE) and a solute-binding protein (UgpB).

It is found in the cell inner membrane. It catalyses the reaction sn-glycerol 3-phosphate(out) + ATP + H2O = sn-glycerol 3-phosphate(in) + ADP + phosphate + H(+). Its function is as follows. Part of the ABC transporter complex UgpBAEC involved in sn-glycerol-3-phosphate (G3P) import. Responsible for energy coupling to the transport system. The chain is sn-glycerol-3-phosphate import ATP-binding protein UgpC from Bordetella avium (strain 197N).